The chain runs to 447 residues: Probable glycine dehydrogenase (decarboxylating) subunit 1 (447 aa).

The protein belongs to the GcvP family. N-terminal subunit subfamily. In terms of assembly, the glycine cleavage system is composed of four proteins: P, T, L and H. In this organism, the P 'protein' is a heterodimer of two subunits.

It carries out the reaction N(6)-[(R)-lipoyl]-L-lysyl-[glycine-cleavage complex H protein] + glycine + H(+) = N(6)-[(R)-S(8)-aminomethyldihydrolipoyl]-L-lysyl-[glycine-cleavage complex H protein] + CO2. The glycine cleavage system catalyzes the degradation of glycine. The P protein binds the alpha-amino group of glycine through its pyridoxal phosphate cofactor; CO(2) is released and the remaining methylamine moiety is then transferred to the lipoamide cofactor of the H protein. This chain is Probable glycine dehydrogenase (decarboxylating) subunit 1, found in Metallosphaera sedula (strain ATCC 51363 / DSM 5348 / JCM 9185 / NBRC 15509 / TH2).